The chain runs to 258 residues: DNA repair protein RecO (258 aa).

Belongs to the RecO family.

Functionally, involved in DNA repair and RecF pathway recombination. In Desulfatibacillum aliphaticivorans, this protein is DNA repair protein RecO.